The sequence spans 309 residues: Homoserine kinase (309 aa).

An ATP-binding site is contributed by 91-101 (PIGSGLGSSAC).

The protein belongs to the GHMP kinase family. Homoserine kinase subfamily.

It is found in the cytoplasm. The enzyme catalyses L-homoserine + ATP = O-phospho-L-homoserine + ADP + H(+). It functions in the pathway amino-acid biosynthesis; L-threonine biosynthesis; L-threonine from L-aspartate: step 4/5. In terms of biological role, catalyzes the ATP-dependent phosphorylation of L-homoserine to L-homoserine phosphate. The chain is Homoserine kinase from Cronobacter sakazakii (strain ATCC BAA-894) (Enterobacter sakazakii).